An 810-amino-acid chain; its full sequence is LPS-assembly protein LptD (810 aa).

The signal sequence occupies residues 1 to 29; the sequence is MTKRTLGYSYPIALTISLVPALTPAIVQA.

Belongs to the LptD family. Component of the lipopolysaccharide transport and assembly complex. Interacts with LptE and LptA.

Its subcellular location is the cell outer membrane. Together with LptE, is involved in the assembly of lipopolysaccharide (LPS) at the surface of the outer membrane. The chain is LPS-assembly protein LptD from Aeromonas hydrophila subsp. hydrophila (strain ATCC 7966 / DSM 30187 / BCRC 13018 / CCUG 14551 / JCM 1027 / KCTC 2358 / NCIMB 9240 / NCTC 8049).